Here is a 296-residue protein sequence, read N- to C-terminus: Acetylglutamate kinase (296 aa).

Substrate contacts are provided by residues 68–69 (GG), arginine 90, and asparagine 193.

It belongs to the acetylglutamate kinase family. ArgB subfamily.

The protein resides in the cytoplasm. It catalyses the reaction N-acetyl-L-glutamate + ATP = N-acetyl-L-glutamyl 5-phosphate + ADP. It functions in the pathway amino-acid biosynthesis; L-arginine biosynthesis; N(2)-acetyl-L-ornithine from L-glutamate: step 2/4. Its function is as follows. Catalyzes the ATP-dependent phosphorylation of N-acetyl-L-glutamate. This Acidothermus cellulolyticus (strain ATCC 43068 / DSM 8971 / 11B) protein is Acetylglutamate kinase.